Reading from the N-terminus, the 27-residue chain is Delta-actitoxin-Avd2a (27 aa).

3 disulfide bridges follow: C3/C17, C4/C11, and C6/C22.

Belongs to the sea anemone short toxin (type III) family.

It is found in the secreted. The protein localises to the nematocyst. Its function is as follows. Specific arthropod (crab and insect) toxin that inhibits inactivation of voltage-gated sodium channels. It competes well with the site-3 toxin LqhalphaIT (from the scorpion L.quinquestriatus (AC P17728)) on binding to cockroach neuronal membranes (Ki=21.4 nM), and inhibits the inactivation of D.melanogaster channel (DmNav1), but not that of mammalian Navs expressed in Xenopus oocytes. Its activity is synergically enhanced by ligands of receptor site-4 (Bj-xtrIT (AC P56637)). Its ability to inhibit the channel mutant DmNav1[D1701R] only decreases 5-fold, whereas the inhibition activity is completely lost by LqhalphaIT and Av2 when tested on DmNav1[D1701R]. This Anemonia sulcata (Mediterranean snakelocks sea anemone) protein is Delta-actitoxin-Avd2a.